The following is a 611-amino-acid chain: Mitochondrial import receptor subunit TOM70 (611 aa).

Ala-2 carries the N-acetylalanine modification. Residues 2-41 (AASKPIEAAMAAAAAPGSGNGVGGGGGTAGPGSGAGTLPR) lie on the Mitochondrial intermembrane side of the membrane. A helical transmembrane segment spans residues 42-62 (WHVALAIGAPLLLGAGAMYLW). Topologically, residues 63–611 (SRRRRRREAG…KKYGLKPPTL (549 aa)) are cytoplasmic. Residues 69–110 (REAGGRGDASGLKRNSERKTPEGRASPALGSGHHDGSGDSLE) form a disordered region. Arg-74 carries the omega-N-methylarginine modification. 5 positions are modified to phosphoserine: Ser-94, Ser-99, Ser-105, Ser-108, and Ser-113. TPR repeat units lie at residues 117–150 (AQAAKNKGNKYFKAGKYEQAIQCYTEAISLCPTE) and 156–189 (STFYQNRAAAFEQLQKWKEVAQDCTKAVELNPKY). Residue Lys-188 is modified to N6-acetyllysine. Residue Lys-278 forms a Glycyl lysine isopeptide (Lys-Gly) (interchain with G-Cter in SUMO2) linkage. TPR repeat units follow at residues 297-330 (ENSGYLKAKQYMEEENYDKIISECSKEIDAQGKY), 332-365 (AEALLLRATFYLLIGSANAAKPDLDKVISLKEAN), 370-403 (ANALIKRGTMCMQQQQPMLSTQDFNMAAEIDPMN), 404-437 (SDVYHHRGQLKILLDLVEEAVADFDACIRLRPKF), 445-478 (CFALYRQAYTANNSSQVQAAMKGFEEIIKKFPRC), 479-512 (AEGYALYAQALTDQQQFGKADEMYDKCIDLEPDN), 514-547 (TTYVHKGLLQLQWKQDLDKGLELISKAIEIDNKC), and 548-581 (DFAYETMGTIEVQRGNMEKAIDMFNKAINLAKSE).

The protein belongs to the Tom70 family. As to quaternary structure, forms part of the preprotein translocase complex of the outer mitochondrial membrane (TOM complex) which consists of at least 7 different proteins (TOMM5, TOMM6, TOMM7, TOMM20, TOMM22, TOMM40 and TOMM70). Interacts with CAPN8. Interacts with TRADD, TRAF6 and STING. Interacts with MAVS. Interacts with HSPA8 and HSP90AA1; both interactions are required for preprotein mitochondrial import. The interaction with HSP90AA1 is direct and mediates the association of TOMM70 with IRF3 and TBK1. Upon mitochondrial depolarization, interacts with PINK1; the interaction is required for PINK1-TOM-TIM23 supercomplex formation which is critical for PINK1 stabilization at the outer mitochondrial membrane, kinase activation and downstream mitophagy. Expressed in the base region of the oxyntic and pyloric mucosae.

It is found in the mitochondrion outer membrane. Acts as a receptor of the preprotein translocase complex of the outer mitochondrial membrane (TOM complex). Recognizes and mediates the translocation of mitochondrial preproteins from the cytosol into the mitochondria in a chaperone dependent manner. Mediates TBK1 and IRF3 activation induced by MAVS in response to virus infection and promotes host antiviral responses during virus infection. This is Mitochondrial import receptor subunit TOM70 from Mus musculus (Mouse).